We begin with the raw amino-acid sequence, 416 residues long: Tyrosine--tRNA ligase (416 aa).

Y39 lines the L-tyrosine pocket. The 'HIGH' region motif lies at 44–53 (CTASSLHVGS). Residues Y176 and Q180 each contribute to the L-tyrosine site. The 'KMSKS' region signature appears at 236-240 (KMGKT). K239 is a binding site for ATP. Residues 349–415 (ISLIDLLHDI…GKKRHIKVMV (67 aa)) enclose the S4 RNA-binding domain.

This sequence belongs to the class-I aminoacyl-tRNA synthetase family. TyrS type 1 subfamily. In terms of assembly, homodimer.

The protein localises to the cytoplasm. The catalysed reaction is tRNA(Tyr) + L-tyrosine + ATP = L-tyrosyl-tRNA(Tyr) + AMP + diphosphate + H(+). Functionally, catalyzes the attachment of tyrosine to tRNA(Tyr) in a two-step reaction: tyrosine is first activated by ATP to form Tyr-AMP and then transferred to the acceptor end of tRNA(Tyr). The polypeptide is Tyrosine--tRNA ligase (Wolbachia sp. subsp. Brugia malayi (strain TRS)).